The sequence spans 596 residues: Zinc finger E-box-binding homeobox protein zag-1 (596 aa).

The C2H2-type 1 zinc finger occupies 24 to 46 (FKCPECTKAFKFKHHLKEHIRIH). Residues 52 to 72 (FECQQCHKRFSHSGSYSSHMS) form a C2H2-type 2; degenerate zinc finger. Positions 133–145 (LENGTSPTPTQEP) are enriched in polar residues. Disordered stretches follow at residues 133 to 225 (LENG…RPLR), 324 to 369 (NNSL…EPEW), and 395 to 421 (GFVT…GSSS). Positions 165 to 179 (SEVKTEVKTEVKTED) are enriched in basic and acidic residues. Over residues 188–200 (PAVSMSLSPAPEQ) the composition is skewed to polar residues. Residues 201–216 (NGNESMNNGGSGSDGK) are compositionally biased toward low complexity. Residues 223 to 282 (PLRSRSFLNDSQVAVLQNHFKRNPFPSKYELSAVAEQIGVNKRVVQVWFQNTRAKERRSN) constitute a DNA-binding region (homeobox). Over residues 331 to 355 (QDERNNENTDEVMDHDGLKDGKETP) the composition is skewed to basic and acidic residues. 2 C2H2-type zinc fingers span residues 481-503 (FSCD…KYEH) and 509-531 (YKCD…KRLH). Residues 537–560 (FQCDKCLKRFSHSGSYSQHMNHRY) form a C2H2-type 5; degenerate zinc finger. The segment at 569–596 (QPASPSDVLNGGSVTVSPSSSNTPPPST) is disordered. Residues 578-590 (NGGSVTVSPSSSN) are compositionally biased toward low complexity.

In terms of tissue distribution, expressed in the six touch receptor neurons (TRNs) but not in the FLP and PVD neurons. Expressed in the M4 cholinergic motor neuron.

It localises to the nucleus. In terms of biological role, transcription factor. Down-regulates expression of genes involved in either the synthesis or reuptake of serotonin, dopamine and GABA. Acts as a transcriptional repressor to regulate multiple, discrete, neuron-specific aspects of terminal differentiation, including cell migration, axonal development and gene expression. Promotes touch receptor neuron differentiation by repressing the expression of egl-44 and egl-46. As egl-44 and egl-46, probably acting as a heterodimer, repress expression of zag-1 in FLP neurons, together these proteins form a bistable, negative-feedback loop that regulates the choice between neuronal fates. Required for axon guidance. Involved in the proper development of the pharynx. Required for pharynx isthmus peristalsis, probably via a role in the differentiation of the M4 cholinergic motor neuron. Directly represses its own transcription by interacting with conserved E-box sequence motifs 5'-CACCTG-3' in its own promoter. May also act as a transcriptional activator of the homeodomain ceh-28. This is Zinc finger E-box-binding homeobox protein zag-1 from Caenorhabditis elegans.